Here is a 24-residue protein sequence, read N- to C-terminus: Osteocalcin (24 aa).

Positions 1–24 constitute a Gla domain; it reads REVCELNPDCDELADHIGFQEAYR. Residues Glu2, Glu5, and Asp11 each coordinate Ca(2+). A 4-carboxyglutamate mark is found at Glu2 and Glu5. A disulfide bridge links Cys4 with Cys10.

This sequence belongs to the osteocalcin/matrix Gla protein family. Gamma-carboxyglutamate residues are formed by vitamin K dependent carboxylation by GGCX. These residues are essential for the binding of calcium. Decarboxylation promotes the hormone activity.

It localises to the secreted. Functionally, the carboxylated form is one of the main organic components of the bone matrix, which constitutes 1-2% of the total bone protein: it acts as a negative regulator of bone formation and is required to limit bone formation without impairing bone resorption or mineralization. The carboxylated form binds strongly to apatite and calcium. Its function is as follows. The uncarboxylated form acts as a hormone secreted by osteoblasts, which regulates different cellular processes, such as energy metabolism, male fertility and brain development. Regulates of energy metabolism by acting as a hormone favoring pancreatic beta-cell proliferation, insulin secretion and sensitivity and energy expenditure. Uncarboxylated osteocalcin hormone also promotes testosterone production in the testes: acts as a ligand for G protein-coupled receptor GPRC6A at the surface of Leydig cells, initiating a signaling response that promotes the expression of enzymes required for testosterone synthesis in a CREB-dependent manner. Also acts as a regulator of brain development: osteocalcin hormone crosses the blood-brain barrier and acts as a ligand for GPR158 on neurons, initiating a signaling response that prevents neuronal apoptosis in the hippocampus, favors the synthesis of all monoamine neurotransmitters and inhibits that of gamma-aminobutyric acid (GABA). Osteocalcin also crosses the placenta during pregnancy and maternal osteocalcin is required for fetal brain development. This is Osteocalcin from Homo sapiens neanderthalensis (Neanderthal).